A 429-amino-acid polypeptide reads, in one-letter code: C4-dicarboxylate transport protein (429 aa).

Transmembrane regions (helical) follow at residues 3-23 (VSIF…GVLL), 44-64 (LIKM…IAGM), 76-96 (IALL…LVVV), 144-164 (AFAS…GFAL), 184-204 (VIFG…FGAM), 222-242 (LILC…GTIA), 331-351 (TLLV…GSGF), and 352-372 (IVLA…LALI).

Belongs to the dicarboxylate/amino acid:cation symporter (DAACS) (TC 2.A.23) family.

It is found in the cell inner membrane. In terms of biological role, responsible for the transport of dicarboxylates such as succinate, fumarate, and malate from the periplasm across the membrane. This Yersinia pestis bv. Antiqua (strain Antiqua) protein is C4-dicarboxylate transport protein.